Consider the following 413-residue polypeptide: Interferon-inducible GTPase 1 (413 aa).

G2 carries the N-myristoyl glycine lipid modification. The IRG-type G domain occupies 68–250; sequence SVLNVAVTGE…PVLMDKLISD (183 aa). Residues G79, G81, K82, S83, S84, T102, and G103 each contribute to the GDP site. A (Microbial infection) Phosphothreonine; by ROP18 modification is found at T102. At T108 the chain carries (Microbial infection) Phosphothreonine; by ROP18. The GDP site is built by K184, D186, S187, and N232. A disulfide bridge links C236 with C410.

It belongs to the TRAFAC class dynamin-like GTPase superfamily. IRG family. In terms of assembly, monomer, as apoenzyme and in the GDP-bound form. Homooligomer, upon GTP binding. Interacts with HOOK3. As to quaternary structure, (Microbial infection) Interacts with Toxoplasma gondii GRA7 in GTP-dependent manner; the interaction results in faster turnover of the GTP-activated IIGP1 oligomer. Interacts with T.gondii ROP5; the interaction results in inhibition of IRGA6/IIGP1 GTPase activity and oligomerization. Myristoylated. In terms of processing, (Microbial infection) Phosphorylated by Toxoplasma gondii ROP18 from virulent strains.

The protein resides in the cytoplasm. It localises to the nucleus membrane. The protein localises to the endoplasmic reticulum membrane. Its subcellular location is the golgi apparatus. It is found in the golgi stack membrane. The protein resides in the parasitophorous vacuole membrane. It carries out the reaction GTP + H2O = GDP + phosphate + H(+). Its function is as follows. GTPase with low activity. Has higher affinity for GDP than for GTP. Plays a role in resistance to intracellular pathogens. During infection with avirulent Toxoplasma gondii strains, recruited to the parasitophorous vacuole membrane. Required for disruption of the parasitophorous vacuole formed following T.gondii infection and subsequent killing of the parasite. Mediates resistance to Chlamydia trachomatis infection by targeting bacterial inclusions to autophagosomes for subsequent lysosomal destruction. The sequence is that of Interferon-inducible GTPase 1 (Iigp1) from Mus musculus (Mouse).